Reading from the N-terminus, the 663-residue chain is Rho GTPase-activating protein 18 (663 aa).

Disordered stretches follow at residues 14 to 73 and 85 to 106; these read AYHP…DESM and RSNE…DEGE. Residues 27 to 37 are compositionally biased toward basic and acidic residues; it reads SHVKGGDEATS. The segment covering 38-51 has biased composition (polar residues); the sequence is SRRYGQYTINQEGS. Phosphoserine is present on residues S65 and S68. Basic and acidic residues predominate over residues 85–102; sequence RSNENRQEGQEAIVVKEP. At T156 the chain carries Phosphothreonine. Disordered regions lie at residues 173 to 228 and 245 to 277; these read FAQQ…PASE and KEFS…TRIG. Composition is skewed to basic and acidic residues over residues 178–205 and 212–222; these read EAQE…KDDQ and DSKEQISRVPE. Residues S260 and S263 each carry the phosphoserine modification. The Rho-GAP domain maps to 324–523; the sequence is IPLTILLEQD…LLIRYQKILW (200 aa). The residue at position 610 (S610) is a Phosphoserine.

Interacts with MPHOSPH6. In terms of tissue distribution, widely expressed: expressed in most organs, except small intestine.

It is found in the cytoplasm. Rho GTPase activating protein that suppresses F-actin polymerization by inhibiting Rho. Rho GTPase activating proteins act by converting Rho-type GTPases to an inactive GDP-bound state. Plays a key role in tissue tension and 3D tissue shape by regulating cortical actomyosin network formation. Acts downstream of YAP1 and inhibits actin polymerization, which in turn reduces nuclear localization of YAP1. Regulates cell shape, spreading, and migration. The chain is Rho GTPase-activating protein 18 from Mus musculus (Mouse).